We begin with the raw amino-acid sequence, 146 residues long: Anti-sigma F factor (146 aa).

Belongs to the anti-sigma-factor family.

It catalyses the reaction L-seryl-[protein] + ATP = O-phospho-L-seryl-[protein] + ADP + H(+). It carries out the reaction L-threonyl-[protein] + ATP = O-phospho-L-threonyl-[protein] + ADP + H(+). Functionally, binds to sigma F and blocks its ability to form an RNA polymerase holoenzyme (E-sigma F). Phosphorylates SpoIIAA on a serine residue. This phosphorylation may enable SpoIIAA to act as an anti-anti-sigma factor that counteracts SpoIIAB and thus releases sigma F from inhibition. This chain is Anti-sigma F factor, found in Halalkalibacterium halodurans (strain ATCC BAA-125 / DSM 18197 / FERM 7344 / JCM 9153 / C-125) (Bacillus halodurans).